A 379-amino-acid polypeptide reads, in one-letter code: Cytochrome b (379 aa).

4 consecutive transmembrane segments (helical) span residues 33–53, 77–98, 113–133, and 178–198; these read FGSLLGTCLVIQILTGLFLAM, WLIRYLHANGASMFFICLFIHV, WNIGIILFLTTMATAFVGYVL, and FFAFHFILPFIIAAFTLVHLL. Residues His83 and His97 each contribute to the heme b site. His182 and His196 together coordinate heme b. His201 is a binding site for a ubiquinone. The next 4 helical transmembrane spans lie at 226–246, 288–308, 320–340, and 347–367; these read TKDLLGIFLLLLALMILTLFF, LGGVLALILSILILATFPLLN, ITQTIYWIFIANLLVLTWIGG, and FTTIGQIASITYFAIIIILIP.

It belongs to the cytochrome b family. The cytochrome bc1 complex contains 11 subunits: 3 respiratory subunits (MT-CYB, CYC1 and UQCRFS1), 2 core proteins (UQCRC1 and UQCRC2) and 6 low-molecular weight proteins (UQCRH/QCR6, UQCRB/QCR7, UQCRQ/QCR8, UQCR10/QCR9, UQCR11/QCR10 and a cleavage product of UQCRFS1). This cytochrome bc1 complex then forms a dimer. Heme b is required as a cofactor.

The protein resides in the mitochondrion inner membrane. Its function is as follows. Component of the ubiquinol-cytochrome c reductase complex (complex III or cytochrome b-c1 complex) that is part of the mitochondrial respiratory chain. The b-c1 complex mediates electron transfer from ubiquinol to cytochrome c. Contributes to the generation of a proton gradient across the mitochondrial membrane that is then used for ATP synthesis. In Akodon azarae (Azara's grass mouse), this protein is Cytochrome b (MT-CYB).